Reading from the N-terminus, the 106-residue chain is Large ribosomal subunit protein P1 (106 aa).

Over residues 66 to 76 the composition is skewed to low complexity; the sequence is AQPQATQAQPA. The interval 66 to 106 is disordered; the sequence is AQPQATQAQPAAEEKKEEKKEEEKKGPSEEEIASGLASLFG. The span at 77–93 shows a compositional bias: basic and acidic residues; the sequence is AEEKKEEKKEEEKKGPS.

This sequence belongs to the eukaryotic ribosomal protein P1/P2 family. As to quaternary structure, part of the 50S ribosomal subunit. Homodimer, it forms part of the ribosomal stalk which helps the ribosome interact with GTP-bound translation factors. Forms a heptameric uL10/P0(P1)2(P1)2(P1)2 complex, where uL10/P0 forms an elongated spine to which the P1 dimers bind in a sequential fashion.

Forms part of the ribosomal stalk, playing a central role in the interaction of the ribosome with GTP-bound translation factors. This is Large ribosomal subunit protein P1 from Saccharolobus solfataricus (strain ATCC 35092 / DSM 1617 / JCM 11322 / P2) (Sulfolobus solfataricus).